We begin with the raw amino-acid sequence, 74 residues long: UPF0435 protein ABC2298 (74 aa).

Belongs to the UPF0435 family.

The polypeptide is UPF0435 protein ABC2298 (Shouchella clausii (strain KSM-K16) (Alkalihalobacillus clausii)).